The sequence spans 170 residues: Siroheme decarboxylase NirL subunit (170 aa).

The protein belongs to the Ahb/Nir family. Probably forms a complex composed of NirD, NirL, NirG and NirH. All proteins are required for the total conversion of siroheme to didecarboxysiroheme.

It carries out the reaction siroheme + 2 H(+) = 12,18-didecarboxysiroheme + 2 CO2. Its pathway is porphyrin-containing compound metabolism. In terms of biological role, involved in heme d1 biosynthesis. Catalyzes the decarboxylation of siroheme into didecarboxysiroheme. The polypeptide is Siroheme decarboxylase NirL subunit (Stutzerimonas stutzeri (Pseudomonas stutzeri)).